Here is a 526-residue protein sequence, read N- to C-terminus: ATP synthase subunit alpha (526 aa).

171–178 contributes to the ATP binding site; the sequence is GDRQTGKT.

The protein belongs to the ATPase alpha/beta chains family. In terms of assembly, F-type ATPases have 2 components, CF(1) - the catalytic core - and CF(0) - the membrane proton channel. CF(1) has five subunits: alpha(3), beta(3), gamma(1), delta(1), epsilon(1). CF(0) has four main subunits: a(1), b(1), b'(1) and c(9-12).

It is found in the cell inner membrane. It catalyses the reaction ATP + H2O + 4 H(+)(in) = ADP + phosphate + 5 H(+)(out). Its function is as follows. Produces ATP from ADP in the presence of a proton gradient across the membrane. The alpha chain is a regulatory subunit. The chain is ATP synthase subunit alpha from Chlorobium phaeovibrioides (strain DSM 265 / 1930) (Prosthecochloris vibrioformis (strain DSM 265)).